The chain runs to 254 residues: Pyruvate dehydrogenase complex repressor (254 aa).

One can recognise an HTH gntR-type domain in the interval 9-77 (PKLSDVIEQQ…QGGGTFVQSS (69 aa)). A DNA-binding region (H-T-H motif) is located at residues 37 to 56 (ERELAKQFDVSRPSLREAIQ).

Its function is as follows. Transcriptional repressor for the pyruvate dehydrogenase complex genes aceEF and lpd. In Escherichia coli O6:H1 (strain CFT073 / ATCC 700928 / UPEC), this protein is Pyruvate dehydrogenase complex repressor (pdhR).